Reading from the N-terminus, the 410-residue chain is Mating-type locus allele B5 protein (410 aa).

The variable domain between B alleles stretch occupies residues methionine 1–cysteine 110. A DNA-binding region (homeobox; TALE-type) is located at residues alanine 107 to histidine 184. Positions arginine 111–valine 410 are highly conserved between B alleles. 3 disordered regions span residues valine 201–aspartate 241, asparagine 275–serine 336, and isoleucine 366–valine 395. Low complexity predominate over residues serine 206–serine 222. Residues lysine 276–arginine 308 carry the Nuclear localization signal motif. The span at glutamine 294 to serine 307 shows a compositional bias: basic residues. The span at proline 312 to serine 336 shows a compositional bias: polar residues. Positions proline 333–valine 410 are not essential for B5 function. The segment covering arginine 375 to glycine 388 has biased composition (basic residues).

The protein belongs to the TALE/M-ATYP homeobox family.

The protein localises to the nucleus. Its function is as follows. The B locus has at least 25 alleles, and any combination of two different B alleles yields a multimeric regulatory protein, that activates genes responsible for the pathogenicity and for the sexual development of the fungus within the corn plant. This Mycosarcoma maydis (Corn smut fungus) protein is Mating-type locus allele B5 protein.